We begin with the raw amino-acid sequence, 157 residues long: Large ribosomal subunit protein uL15 (157 aa).

The interval 1 to 41 is disordered; it reads MKLHELSDNPGATKKRKRVGRGPGSGTGKMGGRGIKGQKSR. Positions 21 to 35 are enriched in gly residues; that stretch reads RGPGSGTGKMGGRGI.

This sequence belongs to the universal ribosomal protein uL15 family. In terms of assembly, part of the 50S ribosomal subunit.

In terms of biological role, binds to the 23S rRNA. This chain is Large ribosomal subunit protein uL15, found in Jannaschia sp. (strain CCS1).